Reading from the N-terminus, the 204-residue chain is Urease accessory protein UreG (204 aa).

A GTP-binding site is contributed by 12–19 (GPVGSGKT).

Belongs to the SIMIBI class G3E GTPase family. UreG subfamily. In terms of assembly, homodimer. UreD, UreF and UreG form a complex that acts as a GTP-hydrolysis-dependent molecular chaperone, activating the urease apoprotein by helping to assemble the nickel containing metallocenter of UreC. The UreE protein probably delivers the nickel.

It localises to the cytoplasm. Its function is as follows. Facilitates the functional incorporation of the urease nickel metallocenter. This process requires GTP hydrolysis, probably effectuated by UreG. In Pseudomonas fluorescens (strain Pf0-1), this protein is Urease accessory protein UreG.